The following is a 195-amino-acid chain: ADP-ribosylation factor L (195 aa).

The N-myristoyl glycine moiety is linked to residue Gly-2. Residues 25–32, 72–76, and 131–134 contribute to the GTP site; these read GLENSGKT, DLLYP, and NKQD.

The protein belongs to the small GTPase superfamily. Arf family.

May be involved in trafficking events within the endosomal system. This chain is ADP-ribosylation factor L (arrL), found in Dictyostelium discoideum (Social amoeba).